Here is a 156-residue protein sequence, read N- to C-terminus: Small ribosomal subunit protein uS7 (156 aa).

It belongs to the universal ribosomal protein uS7 family. Part of the 30S ribosomal subunit. Contacts proteins S9 and S11.

Functionally, one of the primary rRNA binding proteins, it binds directly to 16S rRNA where it nucleates assembly of the head domain of the 30S subunit. Is located at the subunit interface close to the decoding center, probably blocks exit of the E-site tRNA. The chain is Small ribosomal subunit protein uS7 from Azoarcus sp. (strain BH72).